Consider the following 733-residue polypeptide: Photosystem I P700 chlorophyll a apoprotein A2 (733 aa).

Helical transmembrane passes span 46–69 (IFAS…FHVA), 135–158 (LYQG…LHLQ), 175–199 (LNHH…HVAI), 273–291 (IAHH…GHMY), 330–353 (LHFQ…QHMY), 369–395 (AALY…IFFV), 417–439 (ALIS…LYVH), and 516–534 (FLVH…LILV). [4Fe-4S] cluster-binding residues include Cys-558 and Cys-567. 2 helical membrane-spanning segments follow: residues 574–595 (AFYL…YWHW) and 642–664 (LSVW…MFLI). His-653, Met-661, and Tyr-669 together coordinate chlorophyll a. Position 670 (Trp-670) interacts with phylloquinone. A helical membrane pass occupies residues 706-726 (LVGLAHFTVGYVLTYAAFLIA).

Belongs to the PsaA/PsaB family. In terms of assembly, the PsaA/B heterodimer binds the P700 chlorophyll special pair and subsequent electron acceptors. PSI consists of a core antenna complex that captures photons, and an electron transfer chain that converts photonic excitation into a charge separation. The cyanobacterial PSI reaction center is composed of one copy each of PsaA,B,C,D,E,F,I,J,K,L,M and X, and forms trimeric complexes. PSI electron transfer chain: 5 chlorophyll a, 1 chlorophyll a', 2 phylloquinones and 3 4Fe-4S clusters. PSI core antenna: 90 chlorophyll a, 22 carotenoids, 3 phospholipids and 1 galactolipid. P700 is a chlorophyll a/chlorophyll a' dimer, A0 is one or more chlorophyll a, A1 is one or both phylloquinones and FX is a shared 4Fe-4S iron-sulfur center. is required as a cofactor.

The protein localises to the cellular thylakoid membrane. It carries out the reaction reduced [plastocyanin] + hnu + oxidized [2Fe-2S]-[ferredoxin] = oxidized [plastocyanin] + reduced [2Fe-2S]-[ferredoxin]. Its function is as follows. PsaA and PsaB bind P700, the primary electron donor of photosystem I (PSI), as well as the electron acceptors A0, A1 and FX. PSI is a plastocyanin/cytochrome c6-ferredoxin oxidoreductase, converting photonic excitation into a charge separation, which transfers an electron from the donor P700 chlorophyll pair to the spectroscopically characterized acceptors A0, A1, FX, FA and FB in turn. Oxidized P700 is reduced on the lumenal side of the thylakoid membrane by plastocyanin or cytochrome c6. The chain is Photosystem I P700 chlorophyll a apoprotein A2 from Picosynechococcus sp. (strain ATCC 27264 / PCC 7002 / PR-6) (Agmenellum quadruplicatum).